The primary structure comprises 473 residues: Pup--protein ligase (473 aa).

Mg(2+) is bound at residue Glu-9. Residue Arg-54 participates in ATP binding. Tyr-56 lines the Mg(2+) pocket. Asp-58 (proton acceptor) is an active-site residue. Mg(2+) is bound at residue Glu-64. Residues Thr-67 and Trp-425 each contribute to the ATP site.

Belongs to the Pup ligase/Pup deamidase family. Pup-conjugating enzyme subfamily.

The enzyme catalyses ATP + [prokaryotic ubiquitin-like protein]-L-glutamate + [protein]-L-lysine = ADP + phosphate + N(6)-([prokaryotic ubiquitin-like protein]-gamma-L-glutamyl)-[protein]-L-lysine.. The protein operates within protein degradation; proteasomal Pup-dependent pathway. It functions in the pathway protein modification; protein pupylation. Catalyzes the covalent attachment of the prokaryotic ubiquitin-like protein modifier Pup to the proteasomal substrate proteins, thereby targeting them for proteasomal degradation. This tagging system is termed pupylation. The ligation reaction involves the side-chain carboxylate of the C-terminal glutamate of Pup and the side-chain amino group of a substrate lysine. This is Pup--protein ligase from Brachybacterium faecium (strain ATCC 43885 / DSM 4810 / JCM 11609 / LMG 19847 / NBRC 14762 / NCIMB 9860 / 6-10).